A 147-amino-acid chain; its full sequence is Hemoglobin subunit beta (147 aa).

The residue at position 2 (Ser2) is an N-acetylserine. The 145-residue stretch at Phe3–His147 folds into the Globin domain. Ser45 bears the Phosphoserine mark. Lys60 bears the N6-acetyllysine mark. Residue His64 participates in heme b binding. Lys83 is subject to N6-acetyllysine. His93 contributes to the heme b binding site. S-nitrosocysteine is present on Cys94.

It belongs to the globin family. As to quaternary structure, heterotetramer of two alpha chains and two beta chains. Red blood cells.

In terms of biological role, involved in oxygen transport from the lung to the various peripheral tissues. This chain is Hemoglobin subunit beta (HBB), found in Panthera pardus orientalis (Amur leopard).